Here is a 593-residue protein sequence, read N- to C-terminus: Serine/threonine-protein kinase SSN3 (593 aa).

A Protein kinase domain is found at 90-489 (YEIIGYIAAG…AIDALDHVYF (400 aa)). 96–104 (IAAGTYGKV) lines the ATP pocket. Residues 161–199 (KPSHKRFTPPNNSNSTQIRSNSGSETNVRINSSSITNNS) are disordered. Polar residues predominate over residues 169–185 (PPNNSNSTQIRSNSGSE). Positions 186–199 (TNVRINSSSITNNS) are enriched in low complexity. An ATP-binding site is contributed by Lys-211. Asp-312 acts as the Proton acceptor in catalysis. Disordered regions lie at residues 517–551 (DNDITNVGNDNNQANHSQKQPMHGNNNNKNGNMNG) and 569–593 (AAVSGNGNNPTSNTATGGSARKKRK). Polar residues predominate over residues 518 to 536 (NDITNVGNDNNQANHSQKQ). Positions 540–551 (GNNNNKNGNMNG) are enriched in low complexity. The segment covering 573–585 (GNGNNPTSNTATG) has biased composition (polar residues).

The protein belongs to the protein kinase superfamily. CMGC Ser/Thr protein kinase family. CDC2/CDKX subfamily. As to quaternary structure, component of the SRB8-11 complex, a regulatory module of the Mediator complex. Requires Mg(2+) as cofactor.

Its subcellular location is the nucleus. It carries out the reaction L-seryl-[protein] + ATP = O-phospho-L-seryl-[protein] + ADP + H(+). The enzyme catalyses L-threonyl-[protein] + ATP = O-phospho-L-threonyl-[protein] + ADP + H(+). It catalyses the reaction [DNA-directed RNA polymerase] + ATP = phospho-[DNA-directed RNA polymerase] + ADP + H(+). Its function is as follows. Component of the SRB8-11 complex. The SRB8-11 complex is a regulatory module of the Mediator complex which is itself involved in regulation of basal and activated RNA polymerase II-dependent transcription. The SRB8-11 complex may be involved in the transcriptional repression of a subset of genes regulated by Mediator. It may inhibit the association of the Mediator complex with RNA polymerase II to form the holoenzyme complex. The SRB8-11 complex phosphorylates the C-terminal domain (CTD) of the largest subunit of RNA polymerase II. The protein is Serine/threonine-protein kinase SSN3 (SSN3) of Kluyveromyces lactis (strain ATCC 8585 / CBS 2359 / DSM 70799 / NBRC 1267 / NRRL Y-1140 / WM37) (Yeast).